We begin with the raw amino-acid sequence, 125 residues long: uncharacterized protein (125 aa).

This is an uncharacterized protein from Homo sapiens (Human).